The sequence spans 186 residues: Ribonuclease HII (186 aa).

In terms of domain architecture, RNase H type-2 spans 2–186; it reads KILAGVDEVG…KTFSPISDLL (185 aa). A divalent metal cation is bound by residues Asp8, Glu9, and Asp99.

It belongs to the RNase HII family. The cofactor is Mn(2+). Requires Mg(2+) as cofactor.

It is found in the cytoplasm. The catalysed reaction is Endonucleolytic cleavage to 5'-phosphomonoester.. Functionally, endonuclease that specifically degrades the RNA of RNA-DNA hybrids. This Pelagibacter ubique (strain HTCC1062) protein is Ribonuclease HII.